We begin with the raw amino-acid sequence, 692 residues long: Elongation factor G (692 aa).

In terms of domain architecture, tr-type G spans 8 to 282 (EKTRNIGIMA…AVIDYLPSPL (275 aa)). GTP-binding positions include 17–24 (AHVDAGKT), 81–85 (DTPGH), and 135–138 (NKMD).

Belongs to the TRAFAC class translation factor GTPase superfamily. Classic translation factor GTPase family. EF-G/EF-2 subfamily.

The protein localises to the cytoplasm. In terms of biological role, catalyzes the GTP-dependent ribosomal translocation step during translation elongation. During this step, the ribosome changes from the pre-translocational (PRE) to the post-translocational (POST) state as the newly formed A-site-bound peptidyl-tRNA and P-site-bound deacylated tRNA move to the P and E sites, respectively. Catalyzes the coordinated movement of the two tRNA molecules, the mRNA and conformational changes in the ribosome. This chain is Elongation factor G, found in Streptococcus agalactiae serotype III (strain NEM316).